The chain runs to 1877 residues: Transmembrane protein 131 (1877 aa).

Residues 1-20 (MGKRAGGAAAAAAAASTSSA) form the signal peptide. At 21-1115 (AGLEPAAGRG…AEALPRPNWE (1095 aa)) the chain is on the lumenal side. The papD-L domain stretch occupies residues 107 to 281 (RFEPPMLDFH…ETKGVMRASF (175 aa)). The helical transmembrane segment at 1116 to 1136 (LALYIIISGVMSALFLLVIGT) threads the bilayer. Residues 1137–1877 (AYLEAQGIWE…WSNSHFPHEN (741 aa)) lie on the Cytoplasmic side of the membrane. Positions 1197 to 1227 (NASSRPGTGSHRQCGTSVHPHSSHGSKNSAD) are enriched in polar residues. Disordered stretches follow at residues 1197–1573 (NASS…SSST), 1590–1655 (LKQR…NPTF), 1679–1707 (SDFS…SPVS), and 1830–1852 (NSAA…TYNP). Low complexity predominate over residues 1233-1258 (TRNSSSMSSRTSPQAAASQSTSKTSP). The segment covering 1301–1311 (QPPPPVPQHQE) has biased composition (pro residues). Phosphoserine is present on residues S1318 and S1338. 2 stretches are compositionally biased toward basic and acidic residues: residues 1326-1339 (SHPE…HSSE) and 1349-1360 (AMDKDFDHHDSS). A Phosphoserine modification is found at S1371. Over residues 1376 to 1391 (SKGKGKSLQQRKAKPP) the composition is skewed to basic residues. Over residues 1392–1414 (KKQEEKEKRGKGKPQEDELKDAL) the composition is skewed to basic and acidic residues. The segment covering 1420 to 1432 (SSTTTETSNPDTE) has biased composition (low complexity). Composition is skewed to polar residues over residues 1507–1523 (TLAS…TKGT) and 1538–1550 (LPSS…TSSS). The segment covering 1599-1608 (PASPSLPTAP) has biased composition (pro residues). Positions 1609 to 1646 (CPFTSRGSYSSVVNSSGSDTKAKQTSSSKSKLTKAASL) are enriched in low complexity. Polar residues predominate over residues 1830 to 1839 (NSAAAHTPSA). S1857 and S1865 each carry phosphoserine.

This sequence belongs to the TMEM131 family. In terms of assembly, interacts (via PapD-L domain) with COL1A2 (via C-terminus); the interaction is direct, may occur with other collagen proteins, and is involved in assembly and TRAPPIII ER-to-Golgi transport complex-dependent secretion of collagen. Interacts (via C-terminus) with TRAPPC8 (via C-terminus); the interaction is direct.

The protein localises to the membrane. Its function is as follows. Collagen binding transmembrane protein involved in collagen secretion by recruiting the ER-to-Golgi transport complex TRAPPIII. May play a role in the immune response to viral infection. This is Transmembrane protein 131 from Mus musculus (Mouse).